The sequence spans 206 residues: Ribosomal RNA small subunit methyltransferase G (206 aa).

S-adenosyl-L-methionine is bound by residues Gly74, Leu79, 125-126 (VE), and Arg140.

It belongs to the methyltransferase superfamily. RNA methyltransferase RsmG family.

The protein localises to the cytoplasm. It carries out the reaction guanosine(527) in 16S rRNA + S-adenosyl-L-methionine = N(7)-methylguanosine(527) in 16S rRNA + S-adenosyl-L-homocysteine. Functionally, specifically methylates the N7 position of guanine in position 527 of 16S rRNA. The sequence is that of Ribosomal RNA small subunit methyltransferase G from Shewanella putrefaciens (strain CN-32 / ATCC BAA-453).